The sequence spans 545 residues: E3 ubiquitin-protein ligase ipaH9.8 (545 aa).

The interaction with target proteins stretch occupies residues 1–242; it reads MLPINNNFSL…YHGPRIYFSM (242 aa). 8 LRR repeats span residues 57–77, 78–99, 100–117, 118–139, 140–157, 158–179, 182–203, and 205–228; these read NSDE…NLPA, QITL…PVTL, KKLY…VLPP, ALES…PDSL, LTMN…SLPQ, ALKN…SEGN, VVRE…ILNL, and NECS…QRLT. Residues 243-250 form a linker region; it reads SDGQQNTL. The interval 251 to 545 is E3 ubiquitin-protein ligase catalytic domain; the sequence is HRPLADAVTA…SENGSQLHHS (295 aa). Residues 253–545 form the NEL domain; sequence PLADAVTAWF…SENGSQLHHS (293 aa). Catalysis depends on Cys-337, which acts as the Glycyl thioester intermediate.

This sequence belongs to the LRR-containing bacterial E3 ligase family. Also interacts with human and mouse U2AF1 (U2AF35). In terms of processing, ubiquitinated in the presence of host E1 ubiquitin-activating enzyme, E2 ubiquitin-conjugating enzyme and ubiquitin.

It is found in the secreted. It localises to the host cytoplasm. The protein resides in the host nucleus. The enzyme catalyses S-ubiquitinyl-[E2 ubiquitin-conjugating enzyme]-L-cysteine + [acceptor protein]-L-lysine = [E2 ubiquitin-conjugating enzyme]-L-cysteine + N(6)-ubiquitinyl-[acceptor protein]-L-lysine.. Exists in an autoinhibited state in the absence of substrate protein, due to interactions of the leucine-rich repeats with NEL domain. Is activated upon binding to a substrate protein. Effector E3 ubiquitin ligase that interferes with host's ubiquitination pathway and modulates the acute inflammatory responses, thus facilitating bacterial colonization within the host cell. Interacts with IKBKG (NEMO) and TNIP1 (ABIN-1), a ubiquitin-binding adapter protein, which results in TNIP1-dependent 'Lys-27'-linked polyubiquitination of IKBKG. Consequently, polyubiquitinated IKBKG undergoes proteasome-dependent degradation, which perturbs NF-kappa-B activation during bacterial infection. Mediates polyubiquitination of host U2AF1, leading to its proteasomal degradation. Catalyzes 'Lys-48'-linked polyubiquitination and subsequent degradation of a subset of host guanylate-binding proteins (GBP1, GBP2, GBP4 and GBP6), thereby suppressing host cell defense. In contrast, host GBP3 and GBP7 are not ubiquitinated by IpaH9.8. Uses UBE2D2 (UBCH5B) as an E2 ubiquitin-conjugating enzyme. This chain is E3 ubiquitin-protein ligase ipaH9.8 (ipaH9.8), found in Shigella boydii serotype 18 (strain CDC 3083-94 / BS512).